A 161-amino-acid chain; its full sequence is S-ribosylhomocysteine lyase (161 aa).

Residues His-57, His-61, and Cys-127 each coordinate Fe cation.

The protein belongs to the LuxS family. In terms of assembly, homodimer. Fe cation is required as a cofactor.

The enzyme catalyses S-(5-deoxy-D-ribos-5-yl)-L-homocysteine = (S)-4,5-dihydroxypentane-2,3-dione + L-homocysteine. Functionally, involved in the synthesis of autoinducer 2 (AI-2) which is secreted by bacteria and is used to communicate both the cell density and the metabolic potential of the environment. The regulation of gene expression in response to changes in cell density is called quorum sensing. Catalyzes the transformation of S-ribosylhomocysteine (RHC) to homocysteine (HC) and 4,5-dihydroxy-2,3-pentadione (DPD). In Streptococcus equi subsp. equi (strain 4047), this protein is S-ribosylhomocysteine lyase.